Here is a 359-residue protein sequence, read N- to C-terminus: Peptide chain release factor 1 (359 aa).

Residue Q235 is modified to N5-methylglutamine. The tract at residues 285 to 305 (KRDSEISQMRKSQIGSGDRSE) is disordered. Polar residues predominate over residues 290–299 (ISQMRKSQIG).

Belongs to the prokaryotic/mitochondrial release factor family. In terms of processing, methylated by PrmC. Methylation increases the termination efficiency of RF1.

The protein localises to the cytoplasm. In terms of biological role, peptide chain release factor 1 directs the termination of translation in response to the peptide chain termination codons UAG and UAA. The protein is Peptide chain release factor 1 of Ehrlichia canis (strain Jake).